We begin with the raw amino-acid sequence, 158 residues long: NAD(P)H-quinone oxidoreductase subunit J, chloroplastic (158 aa).

The protein belongs to the complex I 30 kDa subunit family. As to quaternary structure, NDH is composed of at least 16 different subunits, 5 of which are encoded in the nucleus.

It is found in the plastid. The protein localises to the chloroplast thylakoid membrane. It catalyses the reaction a plastoquinone + NADH + (n+1) H(+)(in) = a plastoquinol + NAD(+) + n H(+)(out). The enzyme catalyses a plastoquinone + NADPH + (n+1) H(+)(in) = a plastoquinol + NADP(+) + n H(+)(out). Functionally, NDH shuttles electrons from NAD(P)H:plastoquinone, via FMN and iron-sulfur (Fe-S) centers, to quinones in the photosynthetic chain and possibly in a chloroplast respiratory chain. The immediate electron acceptor for the enzyme in this species is believed to be plastoquinone. Couples the redox reaction to proton translocation, and thus conserves the redox energy in a proton gradient. This Aethionema grandiflorum (Persian stone-cress) protein is NAD(P)H-quinone oxidoreductase subunit J, chloroplastic.